We begin with the raw amino-acid sequence, 426 residues long: Glutamate-1-semialdehyde 2,1-aminomutase (426 aa).

K265 is subject to N6-(pyridoxal phosphate)lysine.

Belongs to the class-III pyridoxal-phosphate-dependent aminotransferase family. HemL subfamily. As to quaternary structure, homodimer. Requires pyridoxal 5'-phosphate as cofactor.

The protein resides in the cytoplasm. It catalyses the reaction (S)-4-amino-5-oxopentanoate = 5-aminolevulinate. Its pathway is porphyrin-containing compound metabolism; protoporphyrin-IX biosynthesis; 5-aminolevulinate from L-glutamyl-tRNA(Glu): step 2/2. The polypeptide is Glutamate-1-semialdehyde 2,1-aminomutase (Escherichia coli (strain K12 / DH10B)).